A 179-amino-acid chain; its full sequence is Ribosomal-protein-serine acetyltransferase (179 aa).

An N-acetyltransferase domain is found at 11-172; that stretch reads LELHAVAENH…NDAYDDVNLY (162 aa).

Belongs to the acetyltransferase family. RimL subfamily.

The protein localises to the cytoplasm. It carries out the reaction N-terminal L-seryl-[ribosomal protein bL12] + acetyl-CoA = N-terminal N(alpha)-acetyl-L-seryl-[ribosomal protein bL12] + CoA + H(+). This enzyme acetylates the N-terminal serine of ribosomal protein bL12, converting it into the acetylated form of bL12 known as bL7. This chain is Ribosomal-protein-serine acetyltransferase, found in Escherichia coli (strain K12).